Here is a 142-residue protein sequence, read N- to C-terminus: Antirestriction protein KlcA (142 aa).

It belongs to the antirestriction protein family.

In terms of biological role, could be involved in overcoming restriction barriers during establishment after conjugative transfer. This chain is Antirestriction protein KlcA (klcA), found in Escherichia coli.